The sequence spans 495 residues: Leucine aminopeptidase 2 (495 aa).

A signal peptide spans 1–21; that stretch reads MKTQLLSLGVALTAISQGVIA. The 95-residue stretch at 124–218 folds into the PA domain; it reads PPADKITAEL…ADGKNLASLV (95 aa). Residues asparagine 142 and asparagine 235 are each glycosylated (N-linked (GlcNAc...) asparagine). Zn(2+) is bound by residues histidine 259 and aspartate 271. A glycan (N-linked (GlcNAc...) asparagine) is linked at asparagine 272. The Proton acceptor role is filled by glutamate 303. Residues glutamate 304 and aspartate 332 each coordinate Zn(2+). An N-linked (GlcNAc...) asparagine glycan is attached at asparagine 352. Histidine 430 contributes to the Zn(2+) binding site. Residues 464-495 are disordered; it reads GFPTRPKTGKRDVSPRGQSMPGGGCGHHSVFM.

The protein belongs to the peptidase M28 family. M28A subfamily. Monomer. Zn(2+) serves as cofactor.

The protein localises to the secreted. Functionally, extracellular aminopeptidase that releases a wide variety of amino acids from natural peptides and contributes to pathogenicity. This chain is Leucine aminopeptidase 2 (LAP2), found in Arthroderma otae (strain ATCC MYA-4605 / CBS 113480) (Microsporum canis).